The primary structure comprises 83 residues: Protein MATERNALLY EXPRESSED GENE 3 (83 aa).

A signal peptide spans 1–22 (MQWLAFVAPRWRCVCDQELSAQ). Cys60 and Cys82 form a disulfide bridge.

This sequence belongs to the MEG family. Expressed in endosperm, anther and pollen.

This chain is Protein MATERNALLY EXPRESSED GENE 3 (MEG3), found in Zea mays (Maize).